Reading from the N-terminus, the 527-residue chain is Probable feruloyl esterase B-2 (527 aa).

The signal sequence occupies residues 1–19 (MAPIHYLLPIITLGSAALA). Disulfide bonds link cysteine 28–cysteine 75 and cysteine 63–cysteine 114. N-linked (GlcNAc...) asparagine glycans are attached at residues asparagine 53, asparagine 85, asparagine 98, asparagine 138, and asparagine 180. 4 disulfide bridges follow: cysteine 187–cysteine 441, cysteine 256–cysteine 273, cysteine 282–cysteine 291, and cysteine 503–cysteine 525. Serine 188 (acyl-ester intermediate) is an active-site residue. Positions 257, 260, 262, 264, and 266 each coordinate Ca(2+). 2 N-linked (GlcNAc...) asparagine glycosylation sites follow: asparagine 311 and asparagine 355. Active-site charge relay system residues include aspartate 400 and histidine 440. An N-linked (GlcNAc...) asparagine glycan is attached at asparagine 516.

Belongs to the tannase family.

Its subcellular location is the secreted. It catalyses the reaction feruloyl-polysaccharide + H2O = ferulate + polysaccharide.. Involved in degradation of plant cell walls. Hydrolyzes the feruloyl-arabinose ester bond in arabinoxylans as well as the feruloyl-galactose and feruloyl-arabinose ester bonds in pectin. The protein is Probable feruloyl esterase B-2 (faeB-2) of Aspergillus terreus (strain NIH 2624 / FGSC A1156).